Reading from the N-terminus, the 164-residue chain is Succinate dehydrogenase assembly factor 3, mitochondrial (164 aa).

The transit peptide at 1 to 51 (MRPTLLRLANASGPLPLSVSQASVQLIPPIPLYRRLLRAHRLLPVDMRYMG) directs the protein to the mitochondrion. Residues 136–145 (KSPEQIEREA) show a composition bias toward basic and acidic residues. A disordered region spans residues 136-164 (KSPEQIEREANSAGVSPVNPNDPTTAGNS). Polar residues predominate over residues 153-164 (VNPNDPTTAGNS).

This sequence belongs to the complex I LYR family. SDHAF3 subfamily. As to quaternary structure, interacts with the iron-sulfur protein subunit within the SDH catalytic dimer.

It localises to the mitochondrion matrix. Its function is as follows. Plays an essential role in the assembly of succinate dehydrogenase (SDH), an enzyme complex (also referred to as respiratory complex II) that is a component of both the tricarboxylic acid (TCA) cycle and the mitochondrial electron transport chain, and which couples the oxidation of succinate to fumarate with the reduction of ubiquinone (coenzyme Q) to ubiquinol. Promotes maturation of the iron-sulfur protein subunit of the SDH catalytic dimer, protecting it from the deleterious effects of oxidants. May act together with SDHAF1. The polypeptide is Succinate dehydrogenase assembly factor 3, mitochondrial (Cryptococcus neoformans var. neoformans serotype D (strain B-3501A) (Filobasidiella neoformans)).